Here is a 302-residue protein sequence, read N- to C-terminus: Homoserine O-acetyltransferase (302 aa).

Cysteine 142 functions as the Acyl-thioester intermediate in the catalytic mechanism. Substrate contacts are provided by lysine 163 and serine 192. The active-site Proton acceptor is the histidine 235. Residue glutamate 237 is part of the active site. Arginine 249 serves as a coordination point for substrate.

This sequence belongs to the MetA family.

Its subcellular location is the cytoplasm. The enzyme catalyses L-homoserine + acetyl-CoA = O-acetyl-L-homoserine + CoA. It participates in amino-acid biosynthesis; L-methionine biosynthesis via de novo pathway; O-acetyl-L-homoserine from L-homoserine: step 1/1. Functionally, transfers an acetyl group from acetyl-CoA to L-homoserine, forming acetyl-L-homoserine. This Bacillus pumilus (strain SAFR-032) protein is Homoserine O-acetyltransferase.